The following is a 110-amino-acid chain: Phosphoribosyl-ATP pyrophosphatase (110 aa).

The protein belongs to the PRA-PH family.

It is found in the cytoplasm. It carries out the reaction 1-(5-phospho-beta-D-ribosyl)-ATP + H2O = 1-(5-phospho-beta-D-ribosyl)-5'-AMP + diphosphate + H(+). Its pathway is amino-acid biosynthesis; L-histidine biosynthesis; L-histidine from 5-phospho-alpha-D-ribose 1-diphosphate: step 2/9. This chain is Phosphoribosyl-ATP pyrophosphatase, found in Clostridium botulinum (strain ATCC 19397 / Type A).